A 349-amino-acid chain; its full sequence is Protein Wnt-7a (349 aa).

A signal peptide spans 1–31 (MNRKARRCLGHLFLSLGMVYLRIGGFSTVVA). Cystine bridges form between Cys-73-Cys-84, Cys-123-Cys-131, Cys-133-Cys-152, Cys-200-Cys-214, and Cys-202-Cys-209. 2 N-linked (GlcNAc...) asparagine glycosylation sites follow: Asn-83 and Asn-127. The O-palmitoleoyl serine; by PORCN moiety is linked to residue Ser-206. Residues 238–266 (VEPVRASRNKRPTFLKIKKPLSYRKPMDT) form a disordered linker region. Disulfide bonds link Cys-278–Cys-309, Cys-294–Cys-304, Cys-308–Cys-348, Cys-324–Cys-339, Cys-326–Cys-336, and Cys-331–Cys-332. Residue Asn-295 is glycosylated (N-linked (GlcNAc...) asparagine).

Belongs to the Wnt family. As to quaternary structure, forms a soluble 1:1 complex with AFM; this prevents oligomerization and is required for prolonged biological activity. The complex with AFM may represent the physiological form in body fluids. Interacts with PORCN. Interacts (via intrinsically disordered linker region) with RECK; interaction with RECK confers ligand selectivity for Wnt7 in brain endothelial cells and allows these cells to selectively respond to Wnt7. Interacts with FZD5. Post-translationally, palmitoleoylation is required for efficient binding to frizzled receptors. Depalmitoleoylation leads to Wnt signaling pathway inhibition.

The protein localises to the secreted. It is found in the extracellular space. It localises to the extracellular matrix. Ligand for members of the frizzled family of seven transmembrane receptors that functions in the canonical Wnt/beta-catenin signaling pathway. Plays an important role in embryonic development, including dorsal versus ventral patterning during limb development, skeleton development and urogenital tract development. Required for central nervous system (CNS) angiogenesis and blood-brain barrier regulation. Required for normal, sexually dimorphic development of the Mullerian ducts, and for normal fertility in both sexes. Required for normal neural stem cell proliferation in the hippocampus dentate gyrus. Required for normal progress through the cell cycle in neural progenitor cells, for self-renewal of neural stem cells, and for normal neuronal differentiation and maturation. Promotes formation of synapses via its interaction with FZD5. In Chlorocebus aethiops (Green monkey), this protein is Protein Wnt-7a (WNT7A).